We begin with the raw amino-acid sequence, 137 residues long: Small ribosomal subunit protein uS11 (137 aa).

The disordered stretch occupies residues 116–137 (EDVTPIPHDGTRPKGGRRGRRV).

The protein belongs to the universal ribosomal protein uS11 family. As to quaternary structure, part of the 30S ribosomal subunit.

Located on the platform of the 30S subunit. The polypeptide is Small ribosomal subunit protein uS11 (Pyrococcus furiosus (strain ATCC 43587 / DSM 3638 / JCM 8422 / Vc1)).